Consider the following 327-residue polypeptide: MSHLAELVASAKAAINEASDVAALDNVRVEYLGKKGHLTLQMTTLRELPPEERPAAGAVINEAKEQVQQALNARKADLEGAALNARLAAETIDVSLPGRRIENGGLHPVTRTIDRIESFFGELGFTVATGPEIEDDYHNFDALNIPGHHPARADHDTFWFDATRLLRTQTSGVQIRTMENQQPPIRIIAPGRVYRNDYDQTHTPMFHQMEGLIVDKNISFTNLKGTLHDFLNNFFEEDLQVRFRPSYFPFTEPSAEVDVMGKNGKWLEVLGCGMVHPNVLRNVGIDPEVYSGFAFGMGMERLTMLRYGVTDLRAFFENDLRFLKQFK.

E252 contacts Mg(2+).

Belongs to the class-II aminoacyl-tRNA synthetase family. Phe-tRNA synthetase alpha subunit type 1 subfamily. Tetramer of two alpha and two beta subunits. Mg(2+) is required as a cofactor.

It is found in the cytoplasm. It catalyses the reaction tRNA(Phe) + L-phenylalanine + ATP = L-phenylalanyl-tRNA(Phe) + AMP + diphosphate + H(+). This Klebsiella pneumoniae (strain 342) protein is Phenylalanine--tRNA ligase alpha subunit.